The following is a 102-amino-acid chain: Small ribosomal subunit protein uS10 (102 aa).

Belongs to the universal ribosomal protein uS10 family. As to quaternary structure, part of the 30S ribosomal subunit.

Involved in the binding of tRNA to the ribosomes. The polypeptide is Small ribosomal subunit protein uS10 (Brucella abortus (strain S19)).